Here is a 112-residue protein sequence, read N- to C-terminus: UPF0251 protein MA_4245 (112 aa).

This sequence belongs to the UPF0251 family.

The protein is UPF0251 protein MA_4245 of Methanosarcina acetivorans (strain ATCC 35395 / DSM 2834 / JCM 12185 / C2A).